The primary structure comprises 446 residues: MSDYLSVSTLTKYLKLKFDKDPYLERVYLTGQVSNFRRRPNHQYFSLKDDKSVIQATMWSGQFKKLGFELEEGMKVNVVGRVQLYEPSGSYSIIVEKAEPDGIGALAIQFEQLKKKLSQSGYFDDRHKQLIPQFVRKIGVVTSPSGAVIRDIITTVSRRFPGVEILLFPTKVQGEGAAQEIAQTIALANEKKDLDLLIVGRGGGSIEDLWAFNEECVVEAIFESRLPVISSVGHETDTTLADFVADRRAATPTAAAELATPVTKIDILSWITERENRMYQSSLRLIRTKEERLQKSKQSVIFRQPERLYDGFLQKLDNLNQQLTYSMRDKLQTVRQKQGLLHQKLQGIDLKQRIHIYQERVVQSRRLLSSTMTSQYDSKLARFEKAQDALISLDSSRIVARGYAIIEKNHTLVSTTNGINEGDHLQVKMQDGLLEVEVKDVRQENI.

This sequence belongs to the XseA family. In terms of assembly, heterooligomer composed of large and small subunits.

It is found in the cytoplasm. It catalyses the reaction Exonucleolytic cleavage in either 5'- to 3'- or 3'- to 5'-direction to yield nucleoside 5'-phosphates.. In terms of biological role, bidirectionally degrades single-stranded DNA into large acid-insoluble oligonucleotides, which are then degraded further into small acid-soluble oligonucleotides. This is Exodeoxyribonuclease 7 large subunit from Streptococcus agalactiae serotype III (strain NEM316).